We begin with the raw amino-acid sequence, 244 residues long: Ferric aerobactin reductase IutB (244 aa).

4 residues coordinate [2Fe-2S] cluster: Cys220, Cys221, Cys232, and Cys235.

In terms of assembly, monomer. Requires [2Fe-2S] cluster as cofactor.

It localises to the cytoplasm. The enzyme catalyses 2 a Fe(II)-siderophore + NAD(+) + H(+) = 2 a Fe(III)-siderophore + NADH. It carries out the reaction 2 a Fe(II)-siderophore + NADP(+) + H(+) = 2 a Fe(III)-siderophore + NADPH. Functionally, ferric-siderophore reductase involved in iron removal from the siderophores after their transport into the cell. Acts as a major ferric-aerobactin reductase catalyzing the reduction of Fe(3+)-aerobactin, a citrate-hydroxamate siderophore produced by other bacteria. Catalyzes reduction of Fe(3+)-vulnibactin, a catecholate siderophore synthesized by V.vulnificus, in the absence of VuuB. Catalyzes reduction of ferrioxamine B and Fe(3+)-vibriobactin in vitro. No activity with Fe(3+)-enterobactin. Catalyzes reduction of ferric chelating compound Fe(3+)-nitrilotriacetic acid (NTA) in the presence of NADH, NADPH or reduced glutathione (GSH) as its electron donor in vitro. Also catalyzes reduction of ferric chelating compounds Fe(3+)-citrate and Fe(3+)-EDTA as well as non-complexed FeCl3 in the presence of GSH as its electron donor in vitro. Highest activity with Fe(3+)-NTA as electron acceptor and GSH as donor. The chain is Ferric aerobactin reductase IutB from Vibrio vulnificus.